Reading from the N-terminus, the 382-residue chain is Protein arginine N-methyltransferase 2 (382 aa).

ANK repeat units follow at residues 22–46 (AAQTAAPSVLADLLAEGAPAWFQDD) and 48–80 (LGWSCLHYAAERKEPECLEVLLQGGAVWNAVDK). An RMT2 domain is found at 134–382 (KTSAGDNLVF…RLPIAKMSLI (249 aa)). S-adenosyl-L-methionine is bound by residues F143, M177, 205–210 (FGLGIV), 228–230 (EAH), 255–256 (WQ), and D284.

It belongs to the class I-like SAM-binding methyltransferase superfamily. RMT2 methyltransferase family. As to quaternary structure, monomer.

The protein localises to the cytoplasm. It localises to the nucleus. S-adenosyl-L-methionine-dependent protein-arginine N-methyltransferase that methylates the delta-nitrogen atom of arginine residues to form N5-methylarginine (type IV) in target proteins. Monomethylates ribosomal protein L12. This is Protein arginine N-methyltransferase 2 from Cryptococcus neoformans var. neoformans serotype D (strain JEC21 / ATCC MYA-565) (Filobasidiella neoformans).